Consider the following 422-residue polypeptide: Histidine--tRNA ligase (422 aa).

Belongs to the class-II aminoacyl-tRNA synthetase family. Homodimer.

The protein localises to the cytoplasm. It catalyses the reaction tRNA(His) + L-histidine + ATP = L-histidyl-tRNA(His) + AMP + diphosphate + H(+). The protein is Histidine--tRNA ligase of Prosthecochloris aestuarii (strain DSM 271 / SK 413).